The chain runs to 888 residues: 3-hydroxy-3-methylglutaryl-coenzyme A reductase (888 aa).

The Cytoplasmic portion of the chain corresponds to 1 to 9 (MLSRLFRMH). A helical membrane pass occupies residues 10-39 (GLFVASHPWEVIVGTVTLTICMMSMNMFTG). Residues 40-56 (NNKICGWNYECPKLEED) are Lumenal-facing. The chain crosses the membrane as a helical span at residues 57 to 78 (VLSSDIIILTITRCIAILYIYF). One can recognise an SSD domain in the interval 61 to 218 (DIIILTITRC…MTFFPACVSL (158 aa)). Residues 75-78 (YIYF) carry the INSIG-binding motif motif. Residues 79 to 89 (QFQNLRQLGSK) are Cytoplasmic-facing. K89 participates in a covalent cross-link: Glycyl lysine isopeptide (Lys-Gly) (interchain with G-Cter in ubiquitin). Residues 90–114 (YILGIAGLFTIFSSFVFSTVVIHFL) form a helical membrane-spanning segment. Residues 115–123 (DKELTGLNE) are Lumenal-facing. The chain crosses the membrane as a helical span at residues 124-149 (ALPFFLLLVDLSRASALAKFALSSNS). Topologically, residues 150–159 (QDEVRENIAR) are cytoplasmic. The chain crosses the membrane as a helical span at residues 160-187 (GMAILGPTFTLDALVECLVIGVGTMSGV). Over 188–191 (RQLE) the chain is Lumenal. Residues 192 to 220 (IMCCFGCMSVLANYFVFMTFFPACVSLVL) form a helical membrane-spanning segment. The Cytoplasmic segment spans residues 221-248 (ELSRESREGRPIWQLSHFARVLEEEENK). K248 participates in a covalent cross-link: Glycyl lysine isopeptide (Lys-Gly) (interchain with G-Cter in ubiquitin). The helical transmembrane segment at 249-275 (PNPVTQRVKMIMSLGLVLVHAHSRWIA) threads the bilayer. Topologically, residues 276 to 314 (DPSPQNSTADNSKVSLGLDENVSKRIEPSVSLWQFYLSK) are lumenal. N281 and N296 each carry an N-linked (GlcNAc...) asparagine glycan. The helical transmembrane segment at 315–339 (MISMDIEQVITLSLALLLAVKYIFF) threads the bilayer. Topologically, residues 340–888 (EQAETESTLS…LQGTCTKKAA (549 aa)) are cytoplasmic. Catalysis depends on charge relay system residues E559, K691, and D767. Residue H866 is the Proton donor of the active site. S872 is modified (phosphoserine; by AMPK).

Belongs to the HMG-CoA reductase family. Homotetramer. Homodimer. Interacts (via its SSD) with INSIG1; the interaction, accelerated by sterols, leads to the recruitment of HMGCR to AMFR/gp78 for its ubiquitination by the sterol-mediated ERAD pathway. Interacts with UBIAD1. In terms of processing, undergoes sterol-mediated ubiquitination and ER-associated degradation (ERAD). Accumulation of sterols in the endoplasmic reticulum (ER) membrane, triggers binding of the reductase to the ER membrane protein INSIG1 or INSIG2. The INSIG1 binding leads to the recruitment of the ubiquitin ligase, AMFR/gp78, RNF139 or RNF145, initiating ubiquitination of the reductase. The ubiquitinated reductase is then extracted from the ER membrane and delivered to cytosolic 26S proteosomes by a mechanism probably mediated by the ATPase Valosin-containing protein VCP/p97. The INSIG2-binding leads to the recruitment of the ubiquitin ligase RNF139, initiating ubiquitination of the reductase. Lys-248 is the main site of ubiquitination. Ubiquitination is enhanced by the presence of a geranylgeranylated protein. Post-translationally, N-glycosylated. Deglycosylated by NGLY1 on release from the endoplasmic reticulum (ER) in a sterol-mediated manner. Phosphorylated. Phosphorylation at Ser-872 reduces the catalytic activity.

It localises to the endoplasmic reticulum membrane. It is found in the peroxisome membrane. It carries out the reaction (R)-mevalonate + 2 NADP(+) + CoA = (3S)-3-hydroxy-3-methylglutaryl-CoA + 2 NADPH + 2 H(+). It participates in metabolic intermediate biosynthesis; (R)-mevalonate biosynthesis; (R)-mevalonate from acetyl-CoA: step 3/3. With respect to regulation, regulated by a negative feedback mechanism through sterols and non-sterol metabolites derived from mevalonate. Phosphorylation at Ser-872 down-regulates the catalytic activity. In terms of biological role, catalyzes the conversion of (3S)-hydroxy-3-methylglutaryl-CoA (HMG-CoA) to mevalonic acid, the rate-limiting step in the synthesis of cholesterol and other isoprenoids, thus plays a critical role in cellular cholesterol homeostasis. The chain is 3-hydroxy-3-methylglutaryl-coenzyme A reductase (HMGCR) from Bos taurus (Bovine).